The chain runs to 219 residues: 7-cyano-7-deazaguanine synthase (219 aa).

Residue 10 to 20 (FSGGQDSTTCL) coordinates ATP. The Zn(2+) site is built by Cys-188, Cys-197, Cys-200, and Cys-203.

Belongs to the QueC family. As to quaternary structure, homodimer. Zn(2+) is required as a cofactor.

It catalyses the reaction 7-carboxy-7-deazaguanine + NH4(+) + ATP = 7-cyano-7-deazaguanine + ADP + phosphate + H2O + H(+). It participates in purine metabolism; 7-cyano-7-deazaguanine biosynthesis. Catalyzes the ATP-dependent conversion of 7-carboxy-7-deazaguanine (CDG) to 7-cyano-7-deazaguanine (preQ(0)). The polypeptide is 7-cyano-7-deazaguanine synthase (Clostridium botulinum (strain 657 / Type Ba4)).